Here is a 308-residue protein sequence, read N- to C-terminus: uncharacterized protein (308 aa).

The signal sequence occupies residues 1 to 18 (MKIILLFLAALASFTVHA).

This is an uncharacterized protein from Escherichia coli (strain K12).